An 821-amino-acid polypeptide reads, in one-letter code: Ent-pimara-8(14),15-diene synthase (821 aa).

Mg(2+) is bound by residues aspartate 556, aspartate 560, asparagine 701, threonine 705, and glutamate 709. The DDXXD motif signature appears at 556-560 (DDFFD).

Belongs to the terpene synthase family. Requires Mg(2+) as cofactor. In terms of tissue distribution, highly expressed in roots, at intermediate levels in stems and at lower levels in leaves.

It carries out the reaction ent-copalyl diphosphate = ent-pimara-8(14),15-diene + diphosphate. It functions in the pathway secondary metabolite biosynthesis; terpenoid biosynthesis. Functionally, involved in the biosynthesis of ent-kaurene diterpenoids natural products. Catalyzes the conversion of ent-copalyl diphosphate to ent-pimara-8(14),15-diene. This is Ent-pimara-8(14),15-diene synthase from Oryza sativa subsp. japonica (Rice).